The following is a 276-amino-acid chain: Lyso-ornithine lipid O-acyltransferase (276 aa).

The chain crosses the membrane as a helical span at residues 25-47; it reads LALRGGAMALVLMAGLTLHLAVR.

Belongs to the 1-acyl-sn-glycerol-3-phosphate acyltransferase family. OlsA subfamily.

The protein localises to the membrane. The enzyme catalyses a lyso-ornithine lipid + a fatty acyl-[ACP] = an N(2)-[(3R)-3-(acyloxy)acyl]-L-ornithine lipid + holo-[ACP]. It carries out the reaction a fatty acyl-[ACP] + a 1-acyl-sn-glycero-3-phosphate = a 1,2-diacyl-sn-glycero-3-phosphate + holo-[ACP]. It functions in the pathway lipid metabolism. It participates in phospholipid metabolism. Functionally, catalyzes the second step in the formation of ornithine lipids, which are phosphorus-free membrane lipids. Uses acyl-acyl carrier protein (acyl-AcpP) as an acyl donor and converts lyso-ornithine lipid (LOL) into ornithine lipid (OL). It can also act as an alternate acyl-sn-glycerol-3-phosphate acyltransferase (AGPAT) to ensure glycerophospholipid production. In Rhodobacter capsulatus (strain ATCC BAA-309 / NBRC 16581 / SB1003), this protein is Lyso-ornithine lipid O-acyltransferase.